A 356-amino-acid polypeptide reads, in one-letter code: Replication factor C subunit 3 (356 aa).

N6-acetyllysine is present on Lys-20. Ser-125 carries the phosphoserine modification.

Belongs to the activator 1 small subunits family. In terms of assembly, subunit of the RFC complex, an heteropentameric complex consisting of a large subunit RFC1 and four small subunits RFC2, RFC3, RFC4 and RFC5; the RFC complex interacts with PCNA. Forms an heterotetrameric complex with RFC2, RFC4 and RFC5; this complex has ATPase activity but is not stimulated by PCNA. The heterotetramer of subunits RFC2, RFC3, RFC4 and RFC5 interacts with RAD17. Interacts with CNTD1; this interaction facilitates crossover formation.

It is found in the nucleus. Subunit of the replication factor C (RFC) complex which acts during elongation of primed DNA templates by DNA polymerases delta and epsilon, and is necessary for ATP-dependent loading of proliferating cell nuclear antigen (PCNA) onto primed DNA. The polypeptide is Replication factor C subunit 3 (RFC3) (Homo sapiens (Human)).